Reading from the N-terminus, the 903-residue chain is MITKLLTKVIGSRNDRTLRRLRKIVKEINNYEPAFEALSDEELKAKTVEFRQRIEQGENLDQLLPEAFATVREASKRVFGMRHFDVQLIGGMVLHGGQIAEMRTGEGKTLTATLAAYLNALPGKGVHIVTVNDYLAKRDAETNRPLFEFLGMTVGVNIPNMPQPAKKEAYQADILYGTNNEFGFDYLRDNMAFRPEDRVQRARFFAVVDEVDSILIDEARTPLIISGPAEDSSDLYIRINKLIPLLQKQDKEDSEEYRGDGHFTVDEKSKQVHLTETGQEFVEELLVKNGMMQEGDTLYSPANISLLHHVNAALRAHVLFEKNVDYIVTPDGEVVIVDEHTGRTMPGRRWSDGLHQAVEAKEGVKIQNENQTLASITFQNYFRLYEKLSGMTGTADTEAFEFQQIYGLETVVIPTNKPMVRNDMPDVVYRSEAEKFAAIIEDIKQRVEKGQPVLVGTVSIEKSELLSNALKKAGIKHNVLNAKFHEKEAEIVAEAGKPGAVTIATNMAGRGTDIVLGGSWQAKVEKLDNPTQEQIDAIKAEWKQVHDQVLQAGGLHIIGTERHESRRIDNQLRGRSGRQGDAGSSRFYLSMEDTLLRIFTSDRMAALIQSGMDEGEAIESKMLSRSIEKAQRKVEGRNFDIRKQLLEYDDVANDQRKVVYELRDELMSADDISDMIAQNREDVLNAVMDEYIPPQSLEDMWDIKGLEDRLKNDFDLPLPIQSWLDADNKLYEEALRERIIEQAVEVYKAKEQAVSPAVMRNFEKSVMLQTLDTLWKEHLAAMDHLRQGIHLRGYAQKNPKQEYKRESFELFEDLLESLKSDVITVLSKVRVQQQEEVERMEAQRRAQAEEAARHAQAQHASADDAEQDESNQPMVRDERKVGRNEPCPCGSGKKYKQCHGQIN.

ATP-binding positions include Q87, 105-109, and D513; that span reads GEGKT. Positions 840–853 are enriched in basic and acidic residues; sequence MEAQRRAQAEEAAR. A disordered region spans residues 840–903; that stretch reads MEAQRRAQAE…KYKQCHGQIN (64 aa). Zn(2+)-binding residues include C887, C889, C898, and H899.

The protein belongs to the SecA family. In terms of assembly, monomer and homodimer. Part of the essential Sec protein translocation apparatus which comprises SecA, SecYEG and auxiliary proteins SecDF-YajC and YidC. Requires Zn(2+) as cofactor.

Its subcellular location is the cell inner membrane. It is found in the cytoplasm. It carries out the reaction ATP + H2O + cellular proteinSide 1 = ADP + phosphate + cellular proteinSide 2.. Its function is as follows. Part of the Sec protein translocase complex. Interacts with the SecYEG preprotein conducting channel. Has a central role in coupling the hydrolysis of ATP to the transfer of proteins into and across the cell membrane, serving both as a receptor for the preprotein-SecB complex and as an ATP-driven molecular motor driving the stepwise translocation of polypeptide chains across the membrane. The chain is Protein translocase subunit SecA from Vibrio cholerae serotype O1 (strain M66-2).